The following is a 108-amino-acid chain: Histone H4 (108 aa).

The segment at 1-24 (MTGRGKGGKVLSLGGKGGKGAKRH) is disordered. Residues 17 to 21 (GGKGA) mediate DNA binding.

The protein belongs to the histone H4 family. The nucleosome is a histone octamer containing two molecules each of H2A, H2B, H3 and H4 assembled in one H3-H4 heterotetramer and two H2A-H2B heterodimers. The octamer wraps approximately 147 bp of DNA.

The protein resides in the nucleus. Its subcellular location is the chromosome. Functionally, core component of nucleosome. Nucleosomes wrap and compact DNA into chromatin, limiting DNA accessibility to the cellular machineries which require DNA as a template. Histones thereby play a central role in transcription regulation, DNA repair, DNA replication and chromosomal stability. DNA accessibility is regulated via a complex set of post-translational modifications of histones, also called histone code, and nucleosome remodeling. This is Histone H4 from Mastigamoeba balamuthi (Phreatamoeba balamuthi).